The sequence spans 186 residues: MTTTPLSNLFLRAPDITHVAPPYCLNATWQAENALHTTKTDPACLAARSYLVRASCSTSGPIHCFFFAVYKDSQHSLPLVTELRNFADLVNHPPVLRELEDKRGGRLRCTGPFSCGTIKDVSGASPAGEYTINGIVYHCHCRYPFSKTCWLGASAALQHLRSISSSGTAARAAEQRRHKIKIKIKV.

This sequence belongs to the alphaherpesvirinae HHV-1 UL55 family.

The protein resides in the virion tegument. It localises to the host nucleus matrix. This chain is Tegument protein UL55, found in Human herpesvirus 2 (strain HG52) (HHV-2).